The primary structure comprises 422 residues: DNA-directed RNA polymerase III subunit RPC4 (422 aa).

Disordered stretches follow at residues 1-80 (MSSN…GQQR), 115-190 (KSEG…DDEE), 219-244 (IQEA…GTGL), and 318-350 (RPAV…TKDA). Residues 25–29 (KPSLK) carry the Nuclear localization signal motif. Residues 28–37 (LKFKPKAVAR) show a composition bias toward basic residues. Residues 38–64 (KSKEEREAAASKVKLEEESKRGNDKKH) are compositionally biased toward basic and acidic residues. 2 positions are modified to phosphoserine: S137 and S138. Positions 138 to 148 (SENEAEDDDNE) are enriched in acidic residues. Basic and acidic residues predominate over residues 160 to 170 (MGKEFEARNLI). 3 positions are modified to phosphoserine: S178, S182, and S224. A compositionally biased stretch (basic and acidic residues) spans 219 to 229 (IQEALSEKPTR). Phosphothreonine occurs at positions 228 and 232.

It belongs to the eukaryotic RPC4/POLR3D RNA polymerase subunit family. As to quaternary structure, component of the RNA polymerase III (Pol III) complex consisting of 17 subunits. Interacts with RPC37/RPC5. RPC53/RPC4, RPC37/RPC5 and RPC11/RPC10 probably form a Pol III subcomplex.

The protein resides in the nucleus. In terms of biological role, DNA-dependent RNA polymerase catalyzes the transcription of DNA into RNA using the four ribonucleoside triphosphates as substrates. Specific peripheric component of RNA polymerase III which synthesizes small RNAs, such as 5S rRNA and tRNAs. Essential for tRNA synthesis. The RPC53/RPC4-RPC37/RPC5 subcomplex is required for terminator recognition and reinitiation. This chain is DNA-directed RNA polymerase III subunit RPC4 (RPC53), found in Saccharomyces cerevisiae (strain ATCC 204508 / S288c) (Baker's yeast).